Here is a 490-residue protein sequence, read N- to C-terminus: Ribulose bisphosphate carboxylase large chain (490 aa).

Residues N127 and T177 each contribute to the substrate site. The active-site Proton acceptor is the K179. K181 is a binding site for substrate. The Mg(2+) site is built by K205, D207, and E208. Residue K205 is modified to N6-carboxylysine. H297 acts as the Proton acceptor in catalysis. Substrate contacts are provided by R298, H330, and S382.

Belongs to the RuBisCO large chain family. Type I subfamily. Heterohexadecamer of 8 large chains and 8 small chains. It depends on Mg(2+) as a cofactor.

It localises to the plastid. Its subcellular location is the chloroplast. It catalyses the reaction 2 (2R)-3-phosphoglycerate + 2 H(+) = D-ribulose 1,5-bisphosphate + CO2 + H2O. The enzyme catalyses D-ribulose 1,5-bisphosphate + O2 = 2-phosphoglycolate + (2R)-3-phosphoglycerate + 2 H(+). In terms of biological role, ruBisCO catalyzes two reactions: the carboxylation of D-ribulose 1,5-bisphosphate, the primary event in carbon dioxide fixation, as well as the oxidative fragmentation of the pentose substrate in the photorespiration process. Both reactions occur simultaneously and in competition at the same active site. The sequence is that of Ribulose bisphosphate carboxylase large chain from Cylindrotheca sp. (strain N1) (Marine diatom).